The sequence spans 421 residues: Synaptotagmin-1 (421 aa).

Topologically, residues 1–57 are vesicular; the sequence is MVSASHPEALAAPVTTVATLVPHNATEPASPGEGKEDAFSKLKQKFMNELHKIPLPP. A glycan (N-linked (GlcNAc...) asparagine) is linked at Asn24. A helical transmembrane segment spans residues 58–79; the sequence is WALIAIAIVAVLLVVTCCFCVC. S-palmitoyl cysteine attachment occurs at residues Cys74, Cys75, Cys77, Cys79, and Cys82. Over 80-421 the chain is Cytoplasmic; it reads KKCLFKKKNK…EVDAMLAVKK (342 aa). Residues 112–141 are disordered; sequence TMKDQALKDDDAETGLTDGEEKEEPKEEEK. The segment covering 121–133 has biased composition (acidic residues); the sequence is DDAETGLTDGEEK. The residue at position 128 (Thr128) is a Phosphothreonine. The tract at residues 135-381 is phospholipid binding; sequence EPKEEEKLGK…AIGKVFVGYN (247 aa). One can recognise a C2 1 domain in the interval 141-260; the sequence is KLGKLQYSLD…DFGHVTEEWR (120 aa). Residues Leu171, Asp172, and Asp178 each contribute to the Ca(2+) site. Tyr229 bears the Phosphotyrosine mark. The Ca(2+) site is built by Asp230, Phe231, Asp232, Ser235, Lys236, and Asp238. Residue Ser264 is modified to Phosphoserine. The C2 2 domain maps to 272–405; the sequence is KLGDICFSLR…NPRRPIAQWH (134 aa). Ca(2+)-binding residues include Asp303 and Asp309. Phosphoserine is present on residues Ser342 and Ser344. The Ca(2+) site is built by Asp363, Asp365, and Asp371.

It belongs to the synaptotagmin family. As to quaternary structure, homotetramer. Heterodimer; heterodimerizes with SYT2 in presence of calcium. Interacts with SCAMP5. Interacts with STON2. Forms a complex with SV2B, syntaxin 1 and SNAP25. Interacts with SV2A, SV2B and SV2C. Interacts with RIMS1. Interacts with PRRT2. Interacts with DNAJC5 in a phosphorylation-dependent manner. Interacts (via N-terminus) with RAB3A. Interacts with SYT12. Interacts with calmodulin. Interacts with DNM1 (via C-terminal proline-rich domain (PRD)); this interaction facilitates vesicle fission during clathrin-mediated endocytosis (CME). In terms of assembly, (Microbial infection) Interacts with C.botulinum neurotoxin type B (BoNT/B, botB). Has lower affinity for BoNT/B than Syt2; mutating its residues to match those in Syt2 increases its affinity. (Microbial infection) Interacts with C.botulinum neurotoxin type G (BoNT/G, botG). It depends on Ca(2+) as a cofactor. Glycosylated. In terms of tissue distribution, expressed in the brain (at protein level). Predominantly expressed in rostral, phylogenetically younger brain regions, and in some endocrine tissues.

The protein localises to the cytoplasmic vesicle. It is found in the secretory vesicle membrane. The protein resides in the secretory vesicle. Its subcellular location is the synaptic vesicle membrane. It localises to the chromaffin granule membrane. The protein localises to the cytoplasm. Its function is as follows. Calcium sensor that participates in triggering neurotransmitter release at the synapse. May have a regulatory role in the membrane interactions during trafficking of synaptic vesicles at the active zone of the synapse. It binds acidic phospholipids with a specificity that requires the presence of both an acidic head group and a diacyl backbone. A Ca(2+)-dependent interaction between synaptotagmin and putative receptors for activated protein kinase C has also been reported. It can bind to at least three additional proteins in a Ca(2+)-independent manner; these are neurexins, syntaxin and AP2. Plays a role in dendrite formation by melanocytes. Functionally, (Microbial infection) Receptor for C.botulinum neurotoxin type B (BoNT/B, botB); interaction is improved in the presence of gangliosides. BoNT/B toxin binds to the membrane proximal vesicular domain of Syt1 (residues 32-51). In terms of biological role, (Microbial infection) Receptor for C.botulinum neurotoxin type G (BoNT/G, botG); unlike the case with BoNT/B, interaction is not improved in the presence of gangliosides. BoNT/G toxin binds to the vesicular domain of Syt1 (residues 32-53). This chain is Synaptotagmin-1, found in Rattus norvegicus (Rat).